Consider the following 125-residue polypeptide: MKEQTEIGKLKDGRYMVVDDQPCKILGINTSKPGKHGAAKARIDVVGIFDGVKRSIVQPVSAKTYVPIVERKAAQVLSISGDMAQLMDLKEFTNFEIKITDDKKNDVEVGKEVTYIESMGMRKLD.

Lysine 35 is modified (hypusine).

The protein belongs to the eIF-5A family.

Its subcellular location is the cytoplasm. Its function is as follows. Functions by promoting the formation of the first peptide bond. In Methanosphaerula palustris (strain ATCC BAA-1556 / DSM 19958 / E1-9c), this protein is Translation initiation factor 5A (eIF5A).